A 486-amino-acid polypeptide reads, in one-letter code: Solute carrier family 2, facilitated glucose transporter member 5 (486 aa).

M1 is subject to N-acetylmethionine. Over 1 to 19 the chain is Cytoplasmic; that stretch reads MEQEGQEKKKEGRLTLVLA. The helical transmembrane segment at 20–40 threads the bilayer; the sequence is LRTLIAAFGSSFQYAYNVSVC. Y33 serves as a coordination point for D-fructose. The Extracellular segment spans residues 41 to 69; that stretch reads NSPSELMTEFYNDTYYDRTGELIDEFPLT. An N-linked (GlcNAc...) asparagine glycan is attached at N52. The helical transmembrane segment at 70–92 threads the bilayer; that stretch reads LLWSVTVSMFPSGGFAGSLLVGP. At 93-99 the chain is on the cytoplasmic side; it reads LVNKFGR. A helical transmembrane segment spans residues 100–120; sequence KGALLFNNIFSIVPAILMGCS. At 121 to 127 the chain is on the extracellular side; the sequence is KVARSFE. Residues 128–150 form a helical membrane-spanning segment; the sequence is LIIISRLLVGICAGVSSNVVPMY. Residues 151 to 162 lie on the Cytoplasmic side of the membrane; the sequence is LGELAPKNLRGA. The helical transmembrane segment at 163-183 threads the bilayer; that stretch reads LGVESQLFITLGILVAQIFGL. D-fructose is bound at residue Q168. At 184 to 192 the chain is on the extracellular side; it reads RSIRQQKGW. A helical membrane pass occupies residues 193 to 211; that stretch reads PILLGLTGGPAAAACPPFF. Residues 212–274 lie on the Cytoplasmic side of the membrane; sequence PESPRYLLIG…LCAMRGLAWQ (63 aa). The helical transmembrane segment at 275-294 threads the bilayer; the sequence is LISVVPLMWQQLSGVNAIYY. D-fructose-binding positions include Q284 and 292–294; that span reads IYY. Over 295–306 the chain is Extracellular; it reads YDQIYLSPLDTD. The helical transmembrane segment at 307 to 327 threads the bilayer; sequence TQYYTAATGAVNVLMTVCTVF. Over 328-334 the chain is Cytoplasmic; that stretch reads VVESWAR. A helical transmembrane segment spans residues 335-355; sequence LLLLLGFSPLAPTCCVLTAAL. The Extracellular segment spans residues 356–363; that stretch reads ALQDTVSW. A helical transmembrane segment spans residues 364–385; the sequence is MPYISIVCIIVYVIGHAIGPAI. H379 contributes to the D-fructose binding site. The Cytoplasmic segment spans residues 386-402; sequence RSLYTEIFLQSGRPPTW. Residues 403–421 traverse the membrane as a helical segment; it reads WGQVHWLSNFTVGLVFPLI. 407-408 is a binding site for D-fructose; that stretch reads HW. Residues 422 to 426 lie on the Extracellular side of the membrane; the sequence is QWAGL. Residues 427–447 form a helical membrane-spanning segment; that stretch reads YSFIIFGVACLSTTVYTFLIV. At 448-486 the chain is on the cytoplasmic side; sequence PETKGKSFIEIIRRFIRMNKVEVSPDREELKDFPPDVSE.

It belongs to the major facilitator superfamily. Sugar transporter (TC 2.A.1.1) family. Glucose transporter subfamily. In terms of tissue distribution, detected in jejunum. Detected at the intestinal brush-border membrane (at protein level). Detected in duodenum, jejunum and kidney.

It localises to the apical cell membrane. It is found in the cell membrane. Its subcellular location is the sarcolemma. It carries out the reaction D-fructose(out) = D-fructose(in). Functionally, functions as a fructose transporter that has only low activity with other monosaccharides. Can mediate the uptake of deoxyglucose, but with low efficiency. Essential for fructose uptake in the small intestine. Plays a role in the regulation of salt uptake and blood pressure in response to dietary fructose. Required for the development of high blood pressure in response to high dietary fructose intake. The polypeptide is Solute carrier family 2, facilitated glucose transporter member 5 (Oryctolagus cuniculus (Rabbit)).